Consider the following 461-residue polypeptide: Cysteine--tRNA ligase (461 aa).

Cys-29 provides a ligand contact to Zn(2+). Positions 31 to 41 (PTVYNYAHIGN) match the 'HIGH' region motif. Zn(2+) is bound by residues Cys-214, His-239, and Glu-243. The short motif at 271 to 275 (KMSKS) is the 'KMSKS' region element. Lys-274 contributes to the ATP binding site.

It belongs to the class-I aminoacyl-tRNA synthetase family. Monomer. Requires Zn(2+) as cofactor.

The protein resides in the cytoplasm. The enzyme catalyses tRNA(Cys) + L-cysteine + ATP = L-cysteinyl-tRNA(Cys) + AMP + diphosphate. This Hyphomonas neptunium (strain ATCC 15444) protein is Cysteine--tRNA ligase.